The following is a 107-amino-acid chain: U1-lycotoxin-Ls1h (107 aa).

The N-terminal stretch at Met1–Ser20 is a signal peptide. The propeptide occupies Glu21–Arg41. 3 disulfide bridges follow: Cys44–Cys59, Cys51–Cys68, and Cys70–Cys84.

The protein belongs to the neurotoxin 19 (CSTX) family. 04 (U1-Lctx) subfamily. As to expression, expressed by the venom gland.

The protein resides in the secreted. The chain is U1-lycotoxin-Ls1h from Lycosa singoriensis (Wolf spider).